We begin with the raw amino-acid sequence, 226 residues long: Putative uroporphyrinogen-III synthase (226 aa).

The protein belongs to the uroporphyrinogen-III synthase family.

The catalysed reaction is hydroxymethylbilane = uroporphyrinogen III + H2O. Its pathway is porphyrin-containing compound metabolism; protoporphyrin-IX biosynthesis; coproporphyrinogen-III from 5-aminolevulinate: step 3/4. Catalyzes cyclization of the linear tetrapyrrole, hydroxymethylbilane, to the macrocyclic uroporphyrinogen III. The polypeptide is Putative uroporphyrinogen-III synthase (Archaeoglobus fulgidus (strain ATCC 49558 / DSM 4304 / JCM 9628 / NBRC 100126 / VC-16)).